The following is a 477-amino-acid chain: Transmembrane and coiled-coil domain protein 3 (477 aa).

Residues 1-24 (MPGSDTALTVDRTYSDPGRHHRCK) form a disordered region. At Ser46 the chain carries Phosphoserine. 2 coiled-coil regions span residues 63–83 (KVKLNADSLRQKILKVTEQIK) and 112–149 (KQVFEKKNQKSAHSIAQLQKKLEQYHRKLREIEQNGVT). Positions 234–280 (ASPRAYGGSATIVNKPKYGSDDECSSGTSGSADSNGNQSFGAGGTST) are disordered. Ser253 is modified (phosphoserine). The segment covering 258–280 (SSGTSGSADSNGNQSFGAGGTST) has biased composition (polar residues). The stretch at 284-398 (QGKIAKIMEE…KLELHQQEQQ (115 aa)) forms a coiled coil. A run of 2 helical transmembrane segments spans residues 409–429 (VLLGKCINVVLAFMTVILVCV) and 450–470 (FFAVTLLAIFCKNWDHILCAI).

The protein belongs to the TEX28 family. In terms of assembly, may form homodimers and heterodimers with TMCC2 or TMCC3 via the coiled-coil domains. Interacts with ribosomal proteins RPL4 and RPS6.

The protein localises to the endoplasmic reticulum membrane. The protein is Transmembrane and coiled-coil domain protein 3 of Mus musculus (Mouse).